The chain runs to 331 residues: Benzylsuccinate synthase activating enzyme (331 aa).

The region spanning 15-315 is the Radical SAM core domain; it reads QDGPGIRTTI…VTIGGIVGIA (301 aa). [4Fe-4S] cluster-binding residues include C29, C33, C36, C55, C58, C61, C65, C89, C92, C95, and C99. 35–37 serves as a coordination point for S-adenosyl-L-methionine; the sequence is WCH. 4Fe-4S ferredoxin-type domains follow at residues 46-75 and 80-109; these read QEFY…LVRN and TIVQ…IVGQ. S-adenosyl-L-methionine-binding positions include G139, 189-191, and H263; that span reads DLK.

Belongs to the organic radical-activating enzymes family. Requires [4Fe-4S] cluster as cofactor.

It catalyses the reaction glycyl-[protein] + reduced [flavodoxin] + S-adenosyl-L-methionine = glycin-2-yl radical-[protein] + semiquinone [flavodoxin] + 5'-deoxyadenosine + L-methionine + H(+). It participates in xenobiotic degradation; toluene degradation [regulation]. Functionally, activation of benzylsuccinate synthase under anaerobic conditions by generation of an organic free radical, using S-adenosylmethionine and reduced flavodoxin as cosubstrates to produce 5'-deoxy-adenosine. The sequence is that of Benzylsuccinate synthase activating enzyme (bssD) from Thauera aromatica.